The sequence spans 641 residues: 1-deoxy-D-xylulose-5-phosphate synthase (641 aa).

Thiamine diphosphate contacts are provided by residues His79 and Ala120–Ser122. Residue Asp151 participates in Mg(2+) binding. Residues Gly152 to Ala153, Asn180, Tyr290, and Glu372 contribute to the thiamine diphosphate site. Asn180 provides a ligand contact to Mg(2+).

This sequence belongs to the transketolase family. DXPS subfamily. As to quaternary structure, homodimer. Mg(2+) serves as cofactor. It depends on thiamine diphosphate as a cofactor.

The enzyme catalyses D-glyceraldehyde 3-phosphate + pyruvate + H(+) = 1-deoxy-D-xylulose 5-phosphate + CO2. It participates in metabolic intermediate biosynthesis; 1-deoxy-D-xylulose 5-phosphate biosynthesis; 1-deoxy-D-xylulose 5-phosphate from D-glyceraldehyde 3-phosphate and pyruvate: step 1/1. In terms of biological role, catalyzes the acyloin condensation reaction between C atoms 2 and 3 of pyruvate and glyceraldehyde 3-phosphate to yield 1-deoxy-D-xylulose-5-phosphate (DXP). The sequence is that of 1-deoxy-D-xylulose-5-phosphate synthase from Bradyrhizobium sp. (strain BTAi1 / ATCC BAA-1182).